The primary structure comprises 268 residues: Cyclohexadienyl dehydratase (268 aa).

The first 25 residues, 1–25, serve as a signal peptide directing secretion; it reads MPKSFRHLVQALACLALLASASLQA.

This sequence belongs to the bacterial solute-binding protein 3 family. Homodimer.

Its subcellular location is the periplasm. The catalysed reaction is prephenate + H(+) = 3-phenylpyruvate + CO2 + H2O. The enzyme catalyses L-arogenate + H(+) = L-phenylalanine + CO2 + H2O. It participates in amino-acid biosynthesis; L-phenylalanine biosynthesis; L-phenylalanine from L-arogenate: step 1/1. It functions in the pathway amino-acid biosynthesis; L-phenylalanine biosynthesis; phenylpyruvate from prephenate: step 1/1. In terms of biological role, forms alternative pathway for phenylalanine biosynthesis. Can catalyze two reactions: prephenate dehydratase and arogenate dehydratase. May have a role in chemotaxis or transport. The protein is Cyclohexadienyl dehydratase (pheC) of Pseudomonas aeruginosa (strain ATCC 15692 / DSM 22644 / CIP 104116 / JCM 14847 / LMG 12228 / 1C / PRS 101 / PAO1).